A 463-amino-acid chain; its full sequence is Argininosuccinate lyase (463 aa).

Belongs to the lyase 1 family. Argininosuccinate lyase subfamily.

It localises to the cytoplasm. The catalysed reaction is 2-(N(omega)-L-arginino)succinate = fumarate + L-arginine. The protein operates within amino-acid biosynthesis; L-arginine biosynthesis; L-arginine from L-ornithine and carbamoyl phosphate: step 3/3. In Prochlorococcus marinus (strain NATL2A), this protein is Argininosuccinate lyase.